Here is a 198-residue protein sequence, read N- to C-terminus: Recombination protein RecR (198 aa).

Residues 57-72 (CSICGNITEEDPCEIC) form a C4-type zinc finger. Residues 80–175 (SIILVVEEPK…TVTRLAHGLS (96 aa)) enclose the Toprim domain.

The protein belongs to the RecR family.

In terms of biological role, may play a role in DNA repair. It seems to be involved in an RecBC-independent recombinational process of DNA repair. It may act with RecF and RecO. This is Recombination protein RecR from Enterococcus faecalis (strain ATCC 700802 / V583).